Consider the following 302-residue polypeptide: tRNA dimethylallyltransferase (302 aa).

9 to 16 is a binding site for ATP; sequence GPTGSGKT. Residue 11-16 coordinates substrate; sequence TGSGKT.

Belongs to the IPP transferase family. In terms of assembly, monomer. Requires Mg(2+) as cofactor.

It catalyses the reaction adenosine(37) in tRNA + dimethylallyl diphosphate = N(6)-dimethylallyladenosine(37) in tRNA + diphosphate. Catalyzes the transfer of a dimethylallyl group onto the adenine at position 37 in tRNAs that read codons beginning with uridine, leading to the formation of N6-(dimethylallyl)adenosine (i(6)A). The chain is tRNA dimethylallyltransferase from Thermus thermophilus (strain ATCC BAA-163 / DSM 7039 / HB27).